Here is a 268-residue protein sequence, read N- to C-terminus: Secreted RxLR effector protein 6 (268 aa).

Positions M1–A19 are cleaved as a signal peptide. The RxLR-dEER signature appears at R48–R63. A disordered region spans residues I90–K123. Over residues P107–K123 the composition is skewed to polar residues.

It belongs to the RxLR effector family.

The protein localises to the secreted. It is found in the host nucleus. It localises to the host cytoplasm. Functionally, secreted effector that completely suppresses the host cell death induced by cell death-inducing proteins. The sequence is that of Secreted RxLR effector protein 6 from Plasmopara viticola (Downy mildew of grapevine).